Consider the following 164-residue polypeptide: Lipoprotein signal peptidase (164 aa).

A run of 3 helical transmembrane segments spans residues 12–32 (WLWL…LILQ), 70–90 (WFFA…MYRS), and 102–122 (ALII…GFVV). Catalysis depends on residues Asp123 and Asp141. The chain crosses the membrane as a helical span at residues 137–157 (FNLADTAICVGAALIVLEGFL).

The protein belongs to the peptidase A8 family.

The protein localises to the cell inner membrane. The enzyme catalyses Release of signal peptides from bacterial membrane prolipoproteins. Hydrolyzes -Xaa-Yaa-Zaa-|-(S,diacylglyceryl)Cys-, in which Xaa is hydrophobic (preferably Leu), and Yaa (Ala or Ser) and Zaa (Gly or Ala) have small, neutral side chains.. The protein operates within protein modification; lipoprotein biosynthesis (signal peptide cleavage). In terms of biological role, this protein specifically catalyzes the removal of signal peptides from prolipoproteins. The chain is Lipoprotein signal peptidase from Escherichia coli O6:K15:H31 (strain 536 / UPEC).